Consider the following 156-residue polypeptide: MTKMNVESFNLDHTKVVAPFIRLAGTMEGLNGDVIHKYDIRFKQPNKEHMDMPGLHSLEHLMAENIRNHTDKVVDLSPMGCQTGFYVSFINHDDYDDVLNIIDQTLHDVLNASEVPACNEVQCGWAASHSLEGAKTIAQAFLDKREQWNDIYGEGK.

Histidine 56, histidine 60, and cysteine 123 together coordinate Fe cation.

This sequence belongs to the LuxS family. In terms of assembly, homodimer. It depends on Fe cation as a cofactor.

It carries out the reaction S-(5-deoxy-D-ribos-5-yl)-L-homocysteine = (S)-4,5-dihydroxypentane-2,3-dione + L-homocysteine. Involved in the synthesis of autoinducer 2 (AI-2) which is secreted by bacteria and is used to communicate both the cell density and the metabolic potential of the environment. The regulation of gene expression in response to changes in cell density is called quorum sensing. Catalyzes the transformation of S-ribosylhomocysteine (RHC) to homocysteine (HC) and 4,5-dihydroxy-2,3-pentadione (DPD). The sequence is that of S-ribosylhomocysteine lyase from Staphylococcus epidermidis (strain ATCC 35984 / DSM 28319 / BCRC 17069 / CCUG 31568 / BM 3577 / RP62A).